A 292-amino-acid chain; its full sequence is Ribosomal protein L11 methyltransferase (292 aa).

S-adenosyl-L-methionine contacts are provided by Thr136, Gly159, Asp181, and Asn228.

Belongs to the methyltransferase superfamily. PrmA family.

The protein resides in the cytoplasm. It catalyses the reaction L-lysyl-[protein] + 3 S-adenosyl-L-methionine = N(6),N(6),N(6)-trimethyl-L-lysyl-[protein] + 3 S-adenosyl-L-homocysteine + 3 H(+). Methylates ribosomal protein L11. The polypeptide is Ribosomal protein L11 methyltransferase (Rhizobium etli (strain CIAT 652)).